Consider the following 111-residue polypeptide: Large ribosomal subunit protein uL24 (111 aa).

This sequence belongs to the universal ribosomal protein uL24 family. Part of the 50S ribosomal subunit.

Functionally, one of two assembly initiator proteins, it binds directly to the 5'-end of the 23S rRNA, where it nucleates assembly of the 50S subunit. One of the proteins that surrounds the polypeptide exit tunnel on the outside of the subunit. In Chlamydia trachomatis serovar A (strain ATCC VR-571B / DSM 19440 / HAR-13), this protein is Large ribosomal subunit protein uL24.